The following is a 980-amino-acid chain: MAAATASSALKRLDLRDPNALFETHGAEEIRGLERQVRAEIEHKKEELRQMVGERYRDLIEAADTIGQMRRCAEGLVDAVQATDQYCARLRQAGSVAPRVPRAPQPQPPSEKFYSMAAQIKLLLEIPEKIWSAMEASQHLQATQLYLLCCHLHSLLQLDSSNSRYSPILSRFPILIRQVAAASHFRSTILHESKMLLKCQAVSDQAVAEALCSIMLLEESSPRQALTDFLLARKATIQTLLNQSHHGAGIKAQICSLVELLATTLNQAHALFYTLPEGVLPDPSLPCGLLFSTLETVTRQHPTGKGIGALQGEMKLCSWFRHLPTSIIEFQPTLRTLAHPISQEYLKDTLQKWIDMCNEDIKNGIGNLLMYVKSMKGLAGIRDAIWDLLSNESASHSWEVVCQRLLEKPLLFWEDLMQQLFLDRLQTLTREGFESISNSSKELLVSALQELETNNSTSNKHVHFEQNMSFFLWSESPNDLPSDAAWVSVANRAQFASSGLSMKAQAISPCVQNFCSALDSKLKVKLDDLLAYLPSSDTPLLKDTTPTHQPKNSAFDRYADAGTVQDMLRTQSVACIKSVVGCIQAELCTIEEVTREQKDVLHSTKLHAVLFMARLCQSLGELCPHLKQCVVGQCGGSEKPAREARALKKQGKGRAQDVLPAQAQWQGVKEVLLQQSVMAYRVWSTALVKFLICGFTRSLLLRDAGSVLATATNWDELEIQEETESGSSVTSKIRLPTQPSWYVQSFLFSLCQEVNRVGGHALPKVTLQEMLKTCMAQVIAAYEQLTEENQIKKEGAFPMTQNRALQLLYDLRYLTMVLSSKGEEVKSGRSKADSRMEKMTERLEALIDPFDLDVFTPHLNSNLNRLVQRTSVLFGLVTGTENQFASRSSTFNSQEPHNILPLASSQIRFGLLPLSMTSTRKARATSRSVETQAQVGPPALSRVGDPTTHPGSLFRQLASEEDDSPAPSLFKLAWLSSMTK.

The residue at position 2 (Ala-2) is an N-acetylalanine. Position 7 is a phosphoserine (Ser-7). Lys-598 is subject to N6-acetyllysine. Polar residues predominate over residues 923 to 934; the sequence is RATSRSVETQAQ. Residues 923 to 950 form a disordered region; sequence RATSRSVETQAQVGPPALSRVGDPTTHP.

The protein belongs to the COG1 family. In terms of assembly, component of the conserved oligomeric Golgi complex which is composed of eight different subunits and is required for normal Golgi morphology and localization.

It localises to the golgi apparatus membrane. Functionally, required for normal Golgi function. This is Conserved oligomeric Golgi complex subunit 1 (Cog1) from Mus musculus (Mouse).